We begin with the raw amino-acid sequence, 196 residues long: ATP-dependent Clp protease proteolytic subunit (196 aa).

Ser101 (nucleophile) is an active-site residue. The active site involves His126.

This sequence belongs to the peptidase S14 family. In terms of assembly, component of the chloroplastic Clp protease core complex.

The protein resides in the plastid. It localises to the chloroplast stroma. The catalysed reaction is Hydrolysis of proteins to small peptides in the presence of ATP and magnesium. alpha-casein is the usual test substrate. In the absence of ATP, only oligopeptides shorter than five residues are hydrolyzed (such as succinyl-Leu-Tyr-|-NHMec, and Leu-Tyr-Leu-|-Tyr-Trp, in which cleavage of the -Tyr-|-Leu- and -Tyr-|-Trp bonds also occurs).. In terms of biological role, cleaves peptides in various proteins in a process that requires ATP hydrolysis. Has a chymotrypsin-like activity. Plays a major role in the degradation of misfolded proteins. This chain is ATP-dependent Clp protease proteolytic subunit, found in Aethionema cordifolium (Lebanon stonecress).